The primary structure comprises 663 residues: 4-hydroxy-3-methylbut-2-en-1-yl diphosphate synthase (flavodoxin) (663 aa).

[4Fe-4S] cluster-binding residues include Cys-568, Cys-571, Cys-602, and Glu-609.

This sequence belongs to the IspG family. It depends on [4Fe-4S] cluster as a cofactor.

It catalyses the reaction (2E)-4-hydroxy-3-methylbut-2-enyl diphosphate + oxidized [flavodoxin] + H2O + 2 H(+) = 2-C-methyl-D-erythritol 2,4-cyclic diphosphate + reduced [flavodoxin]. It functions in the pathway isoprenoid biosynthesis; isopentenyl diphosphate biosynthesis via DXP pathway; isopentenyl diphosphate from 1-deoxy-D-xylulose 5-phosphate: step 5/6. Functionally, converts 2C-methyl-D-erythritol 2,4-cyclodiphosphate (ME-2,4cPP) into 1-hydroxy-2-methyl-2-(E)-butenyl 4-diphosphate. The chain is 4-hydroxy-3-methylbut-2-en-1-yl diphosphate synthase (flavodoxin) from Leptospira borgpetersenii serovar Hardjo-bovis (strain L550).